We begin with the raw amino-acid sequence, 119 residues long: Ribosome-binding factor A (119 aa).

The protein belongs to the RbfA family. In terms of assembly, monomer. Binds 30S ribosomal subunits, but not 50S ribosomal subunits or 70S ribosomes.

Its subcellular location is the cytoplasm. Functionally, one of several proteins that assist in the late maturation steps of the functional core of the 30S ribosomal subunit. Associates with free 30S ribosomal subunits (but not with 30S subunits that are part of 70S ribosomes or polysomes). Required for efficient processing of 16S rRNA. May interact with the 5'-terminal helix region of 16S rRNA. In Limosilactobacillus reuteri (strain DSM 20016) (Lactobacillus reuteri), this protein is Ribosome-binding factor A.